The sequence spans 491 residues: UDP-N-acetylmuramate--L-alanine ligase (491 aa).

Position 126 to 132 (Gly126 to Thr132) interacts with ATP.

The protein belongs to the MurCDEF family.

The protein resides in the cytoplasm. It catalyses the reaction UDP-N-acetyl-alpha-D-muramate + L-alanine + ATP = UDP-N-acetyl-alpha-D-muramoyl-L-alanine + ADP + phosphate + H(+). Its pathway is cell wall biogenesis; peptidoglycan biosynthesis. Functionally, cell wall formation. This Yersinia pestis (strain Pestoides F) protein is UDP-N-acetylmuramate--L-alanine ligase.